A 175-amino-acid polypeptide reads, in one-letter code: MLSSLSSSITNARQSIAQVLNFALVLSTAFMMWKGLSVVSASSSPIVVVLSGSMEPAFQRGDLLFLWNRDTRTEIGEVLVYNVRGKSIPIVHRVVRTFPEVEGRASAKKGDNNLADDTELYAQDQDYLDRAEDIVGSVRGYIPMVGYVTIMLSEHPWLKTVMLGLMGLMVMIQRE.

Residues 1 to 14 lie on the Cytoplasmic side of the membrane; the sequence is MLSSLSSSITNARQ. Residues 15–31 traverse the membrane as a helical; Signal-anchor for type II membrane protein segment; sequence SIAQVLNFALVLSTAFM. Over 32–175 the chain is Lumenal; the sequence is MWKGLSVVSA…MGLMVMIQRE (144 aa). Residues S53, H92, and D117 each act as charge relay system in the active site. The tract at residues 161-172 is C-terminal short (CTS) helix; it reads VMLGLMGLMVMI.

It belongs to the peptidase S26B family. As to quaternary structure, component of the signal peptidase complex (SPC) composed of a catalytic subunit SEC11 and three accessory subunits SPC1, SPC2 and SPC3. The complex induces a local thinning of the ER membrane which is used to measure the length of the signal peptide (SP) h-region of protein substrates. This ensures the selectivity of the complex towards h-regions shorter than 18-20 amino acids. SPC associates with the translocon complex.

It is found in the endoplasmic reticulum membrane. The catalysed reaction is Cleavage of hydrophobic, N-terminal signal or leader sequences from secreted and periplasmic proteins.. Catalytic component of the signal peptidase complex (SPC) which catalyzes the cleavage of N-terminal signal sequences from nascent proteins as they are translocated into the lumen of the endoplasmic reticulum. Specifically cleaves N-terminal signal peptides that contain a hydrophobic alpha-helix (h-region) shorter than 18-20 amino acids. The sequence is that of Signal peptidase complex catalytic subunit sec11 (sec11) from Penicillium rubens (strain ATCC 28089 / DSM 1075 / NRRL 1951 / Wisconsin 54-1255) (Penicillium chrysogenum).